Reading from the N-terminus, the 515-residue chain is MTLPPPPSRLKPPRNTSSLSLRWRVMLLAMSMVAMVVVLMSVAVYAVVSRALYDDIDNQLHSRARLLIESGSLAADPGKAIEGTAYSDVNAMLVNPGRSIYTANQQGQTLPLGEAEKDVISGELLLSLRTANHQRILAVHLTNGSSLLISKSLAPTGQVLGRLGTVLLIVGGVGVAVAAIAGGMVARAGLRPVGRLTQAAERVARTDDLRPIPVFGSDELARLTEAFNMMLRALTESRERQARLVSDAGHELRTPLTSLRTNVELLMASQAPGAPRLPEEEMAGLRADVIAQIEELSTLVGDLVDLTRDEAGGVVYETVDMAEVVDRSLERVRRRRNDIEFDVNVVGWQVYGDAAGLARAVLNLLDNAAKWSPPGGRVGVRLTQTDPVHAELVVSDQGPGIPEAERRLVFERFYRSTAARAMPGSGLGLAIVKQVVLKHGGALRVEDTVPGGNPPGTSFYVMLPGRPLTPGGNGTAPVPAAQFDPDMRSAGSRADRRVIKNTETNGKSRSASKEL.

Residues 1–24 (MTLPPPPSRLKPPRNTSSLSLRWR) are Cytoplasmic-facing. A helical membrane pass occupies residues 25–45 (VMLLAMSMVAMVVVLMSVAVY). Over 46–165 (AVVSRALYDD…TGQVLGRLGT (120 aa)) the chain is Extracellular. The chain crosses the membrane as a helical span at residues 166 to 186 (VLLIVGGVGVAVAAIAGGMVA). One can recognise an HAMP domain in the interval 187-239 (RAGLRPVGRLTQAAERVARTDDLRPIPVFGSDELARLTEAFNMMLRALTESRE). At 187 to 515 (RAGLRPVGRL…GKSRSASKEL (329 aa)) the chain is on the cytoplasmic side. The Histidine kinase domain maps to 247–467 (DAGHELRTPL…SFYVMLPGRP (221 aa)). Histidine 250 is subject to Phosphohistidine; by autocatalysis. The disordered stretch occupies residues 468–515 (LTPGGNGTAPVPAAQFDPDMRSAGSRADRRVIKNTETNGKSRSASKEL).

It depends on Mg(2+) as a cofactor. The cofactor is Mn(2+). In terms of processing, autophosphorylated.

It is found in the cell membrane. It catalyses the reaction ATP + protein L-histidine = ADP + protein N-phospho-L-histidine.. In terms of biological role, member of the two-component regulatory system MprB/MprA which contributes to maintaining a balance among several systems involved in stress resistance and is required for establishment and maintenance of persistent infection in the host. In response to environmental signals MprB acts both as a membrane-associated protein kinase that undergoes autophosphorylation and subsequently transfers the phosphate to MprA, and a protein phosphatase that dephosphorylates phospho-MprA. This chain is Signal transduction histidine-protein kinase/phosphatase MprB (mprB), found in Mycobacterium sp. (strain KMS).